The chain runs to 555 residues: T-complex protein 1 subunit gamma (555 aa).

The segment at 527–555 (KKKQAPGSGPSKPTIETEGDADNEQILPD) is disordered.

It belongs to the TCP-1 chaperonin family. Heterooligomeric complex of about 850 to 900 kDa that forms two stacked rings, 12 to 16 nm in diameter. Interacts with CCT8.

It localises to the cytoplasm. Functionally, molecular chaperone; assists the folding of proteins upon ATP hydrolysis. Known to play a role, in vitro, in the folding of actin and tubulin. The protein is T-complex protein 1 subunit gamma of Arabidopsis thaliana (Mouse-ear cress).